Here is a 449-residue protein sequence, read N- to C-terminus: Zinc finger and BTB domain-containing protein 14 (449 aa).

The region spanning 36 to 102 is the BTB domain; sequence CDIAIVVEDV…MYTAKISVKK (67 aa). A Glycyl lysine isopeptide (Lys-Gly) (interchain with G-Cter in SUMO2) cross-link involves residue Lys-46. Positions 50-66 match the Nuclear localization signal motif; the sequence is HRCVLAACSTYFKKLFK. Positions 153–194 are disordered; it reads GDAADTQDDDVEEIGDQDDSPSDDTVEGTPPSQEDGKSPTTT. Residues 157-178 show a composition bias toward acidic residues; sequence DTQDDDVEEIGDQDDSPSDDTV. Residues Lys-203 and Lys-249 each participate in a glycyl lysine isopeptide (Lys-Gly) (interchain with G-Cter in SUMO2) cross-link. C2H2-type zinc fingers lie at residues 277–304, 305–332, 333–360, 361–388, and 389–417; these read IACQ…ADRP, FVCE…GYKP, YSCE…NERP, FACH…GEKP, and FVCG…ERKQ.

Belongs to the krueppel C2H2-type zinc-finger protein family. As to quaternary structure, interacts with ZBTB21.

The protein localises to the nucleus. In terms of biological role, transcriptional activator of the dopamine transporter (DAT), binding it's promoter at the consensus sequence 5'-CCTGCACAGTTCACGGA-3'. Binds to 5'-d(GCC)(n)-3' trinucleotide repeats in promoter regions and acts as a repressor of the FMR1 gene. Transcriptional repressor of MYC and thymidine kinase promoters. The sequence is that of Zinc finger and BTB domain-containing protein 14 (ZBTB14) from Homo sapiens (Human).